A 140-amino-acid polypeptide reads, in one-letter code: Large ribosomal subunit protein mL43 (140 aa).

The protein belongs to the mitochondrion-specific ribosomal protein mL43 family. In terms of assembly, component of the mitochondrial large ribosomal subunit (mt-LSU). Mature yeast 74S mitochondrial ribosomes consist of a small (37S) and a large (54S) subunit. The 37S small subunit contains a 15S ribosomal RNA (15S mt-rRNA) and 34 different proteins. The 54S large subunit contains a 21S rRNA (21S mt-rRNA) and 46 different proteins.

The protein localises to the mitochondrion. Its function is as follows. Component of the mitochondrial ribosome (mitoribosome), a dedicated translation machinery responsible for the synthesis of mitochondrial genome-encoded proteins, including at least some of the essential transmembrane subunits of the mitochondrial respiratory chain. The mitoribosomes are attached to the mitochondrial inner membrane and translation products are cotranslationally integrated into the membrane. Also has an extraribosomal function, being essential for mitochondrial genome integrity. May interact with MHR1 to take part in the mtDNA repair mechanism. In Saccharomyces cerevisiae (strain ATCC 204508 / S288c) (Baker's yeast), this protein is Large ribosomal subunit protein mL43 (MRPL51).